Reading from the N-terminus, the 85-residue chain is MAHKKAGGSSRNGRDSHSKRLGVKHFGGETIRSGSIIVRQRGTKFHAGNNVDCAKDHTLFATSQGKVKFEKKGKCNRTYVSIIPE.

The segment at 1–25 is disordered; it reads MAHKKAGGSSRNGRDSHSKRLGVKH.

Belongs to the bacterial ribosomal protein bL27 family.

This chain is Large ribosomal subunit protein bL27, found in Buchnera aphidicola subsp. Baizongia pistaciae (strain Bp).